The sequence spans 89 residues: Small ribosomal subunit protein uS15 (89 aa).

It belongs to the universal ribosomal protein uS15 family. Part of the 30S ribosomal subunit. Forms a bridge to the 50S subunit in the 70S ribosome, contacting the 23S rRNA.

Its function is as follows. One of the primary rRNA binding proteins, it binds directly to 16S rRNA where it helps nucleate assembly of the platform of the 30S subunit by binding and bridging several RNA helices of the 16S rRNA. Functionally, forms an intersubunit bridge (bridge B4) with the 23S rRNA of the 50S subunit in the ribosome. In Paracoccus denitrificans (strain Pd 1222), this protein is Small ribosomal subunit protein uS15.